The sequence spans 324 residues: tRNA N6-adenosine threonylcarbamoyltransferase (324 aa).

3 residues coordinate Fe cation: His107, His111, and Tyr127. Substrate-binding positions include 127–131 (YVSGG), Asp159, Gly172, Glu176, and Asn257. Asp285 lines the Fe cation pocket.

The protein belongs to the KAE1 / TsaD family. As to quaternary structure, monomer. Component of the KEOPS complex that consists of Kae1, Bud32, Cgi121 and Pcc1; the whole complex dimerizes. Fe(2+) is required as a cofactor.

Its subcellular location is the cytoplasm. The enzyme catalyses L-threonylcarbamoyladenylate + adenosine(37) in tRNA = N(6)-L-threonylcarbamoyladenosine(37) in tRNA + AMP + H(+). Its function is as follows. Required for the formation of a threonylcarbamoyl group on adenosine at position 37 (t(6)A37) in tRNAs that read codons beginning with adenine. Is a component of the KEOPS complex that is probably involved in the transfer of the threonylcarbamoyl moiety of threonylcarbamoyl-AMP (TC-AMP) to the N6 group of A37. Kae1 likely plays a direct catalytic role in this reaction, but requires other protein(s) of the complex to fulfill this activity. This chain is tRNA N6-adenosine threonylcarbamoyltransferase, found in Thermococcus sibiricus (strain DSM 12597 / MM 739).